The chain runs to 229 residues: Putative N-acetylmannosamine-6-phosphate 2-epimerase (229 aa).

It belongs to the NanE family.

The catalysed reaction is an N-acyl-D-glucosamine 6-phosphate = an N-acyl-D-mannosamine 6-phosphate. It participates in amino-sugar metabolism; N-acetylneuraminate degradation; D-fructose 6-phosphate from N-acetylneuraminate: step 3/5. In terms of biological role, converts N-acetylmannosamine-6-phosphate (ManNAc-6-P) to N-acetylglucosamine-6-phosphate (GlcNAc-6-P). This Escherichia coli O8 (strain IAI1) protein is Putative N-acetylmannosamine-6-phosphate 2-epimerase.